Here is a 184-residue protein sequence, read N- to C-terminus: Gremlin-1 (184 aa).

Residues 1 to 24 form the signal peptide; that stretch reads MNRTAYTVGALLLLLGTLLPAAEG. N-linked (GlcNAc...) asparagine glycosylation is found at N2 and N42. The segment at 24–78 is disordered; that stretch reads GKKKGSQGAIPPPDKAQHNDSEQTQSPPQPGSRTRGRGQGRGTAMPGEEVLESSQ. Cystine bridges form between C94–C144, C108–C158, C118–C176, and C122–C178. The region spanning 94–184 is the CTCK domain; the sequence is CKTQPLKQTI…QCRCISIDLD (91 aa).

This sequence belongs to the DAN family. In terms of assembly, homodimer; can also form homooligomers. Interacts with BMP2; can form higher oligomers with BMP2. Interacts with SLIT1 and SLIT2 in a glycosylation-dependent manner. As to expression, highly expressed in the brain, kidney, spleen, and testis and weakly expressed in the lung and liver. Predominantly expressed in differentiated cells as neurons in brain, type I cells in lung and globlet cells in intestine.

The protein localises to the secreted. Cytokine that may play an important role during carcinogenesis and metanephric kidney organogenesis, as a BMP antagonist required for early limb outgrowth and patterning in maintaining the FGF4-SHH feedback loop. Down-regulates the BMP4 signaling in a dose-dependent manner. Antagonist of BMP2; inhibits BMP2-mediated differentiation of osteoblasts (in vitro). Acts as inhibitor of monocyte chemotaxis. Can inhibit the growth or viability of normal cells but not transformed cells when is overexpressed. The polypeptide is Gremlin-1 (Grem1) (Rattus norvegicus (Rat)).